A 160-amino-acid chain; its full sequence is Cytochrome b6-f complex subunit 4 (160 aa).

The next 3 helical transmembrane spans lie at Leu36–Val56, Leu95–Glu115, and Thr131–Leu151.

This sequence belongs to the cytochrome b family. PetD subfamily. In terms of assembly, the 4 large subunits of the cytochrome b6-f complex are cytochrome b6, subunit IV (17 kDa polypeptide, PetD), cytochrome f and the Rieske protein, while the 4 small subunits are PetG, PetL, PetM and PetN. The complex functions as a dimer.

It is found in the cellular thylakoid membrane. In terms of biological role, component of the cytochrome b6-f complex, which mediates electron transfer between photosystem II (PSII) and photosystem I (PSI), cyclic electron flow around PSI, and state transitions. This Nostoc punctiforme (strain ATCC 29133 / PCC 73102) protein is Cytochrome b6-f complex subunit 4.